The chain runs to 160 residues: Dysbindin domain-containing protein 1 (160 aa).

S3, S97, and S121 each carry phosphoserine. A disordered region spans residues 95 to 160; it reads ADSDDENLAT…FLTVEEPKED (66 aa). Residues 127-143 are compositionally biased toward basic and acidic residues; it reads TRAEQNREKQPPSDPER.

It belongs to the dysbindin family.

This chain is Dysbindin domain-containing protein 1 (Dbndd1), found in Mus musculus (Mouse).